Reading from the N-terminus, the 974-residue chain is UvrABC system protein A (974 aa).

ATP is bound at residue 34 to 41; sequence GLSGSGKS. ABC transporter domains are found at residues 331–610 and 630–959; these read WARS…TNSL and ISKT…QFLK. ATP is bound at residue 663–670; the sequence is GVSGGGKS. A C4-type zinc finger spans residues 762–788; the sequence is CEACQGDGVIKIEMHFLPDVYVTCDVC.

This sequence belongs to the ABC transporter superfamily. UvrA family. Forms a heterotetramer with UvrB during the search for lesions.

It localises to the cytoplasm. In terms of biological role, the UvrABC repair system catalyzes the recognition and processing of DNA lesions. UvrA is an ATPase and a DNA-binding protein. A damage recognition complex composed of 2 UvrA and 2 UvrB subunits scans DNA for abnormalities. When the presence of a lesion has been verified by UvrB, the UvrA molecules dissociate. The chain is UvrABC system protein A from Brucella suis biovar 1 (strain 1330).